The primary structure comprises 1126 residues: Formin-B (1126 aa).

The interval 1 to 21 (MFFKGKKKDKEKEKSHGNIGN) is disordered. The region spanning 38–406 (EQNLSNEDLK…LILKDPSKES (369 aa)) is the GBD/FH3 domain. A compositionally biased stretch (low complexity) spans 427–447 (LNNSNNNNNNNNSNNNNNDSN). The tract at residues 427-462 (LNNSNNNNNNNNSNNNNNDSNVSTPNINTGSPLLPP) is disordered. The segment covering 448–462 (VSTPNINTGSPLLPP) has biased composition (polar residues). A coiled-coil region spans residues 463–514 (QQYQDLEQKLQLTQNEKNESQNKVKQLESEIKGLNSTLTGLQLKVTKLEADL). Positions 518–532 (SVTTPPSDTNGTTSP) are enriched in polar residues. Disordered stretches follow at residues 518-619 (SVTT…SVPS) and 1004-1078 (ARKK…QNGT). An FH1 domain is found at 527–611 (NGTTSPPIEA…PGAPAVPNLP (85 aa)). Residues 543–597 (GAPPPPPPPPPAPPVSGGGPPPPPPPPPPSSGGGPPPPPPPPSSGGPPPPPPPPG) are compositionally biased toward pro residues. Composition is skewed to low complexity over residues 598-607 (GMKKPGAPAV), 1009-1022 (AASG…SGSS), and 1032-1064 (SPIT…QQQQ). Positions 612–1011 (PKKSSVPSVK…LAARKKAAAS (400 aa)) constitute an FH2 domain. Residues 980-1010 (KFKNEFKRTIESIQKERENVQKLAARKKAAA) are a coiled coil. The region spanning 1071-1100 (DDIPQNGTFMDQLMSKMKGGEAIRASRRAS) is the DAD domain.

This sequence belongs to the formin homology family. Diaphanous subfamily. In terms of assembly, interacts (via GBD/FH3 domain) with activated Rho-GTPases. Interacts with pfyA and pfyB.

Its function is as follows. Formins play an important role in the nucleation of actin and the formation of linear actin filaments. The sequence is that of Formin-B (forB) from Dictyostelium discoideum (Social amoeba).